We begin with the raw amino-acid sequence, 298 residues long: Replication protein A 32 kDa subunit B (298 aa).

Positions 89–163 (VRLVGRMLNK…QVVAYSVRRI (75 aa)) form a DNA-binding region, OB.

The protein belongs to the replication factor A protein 2 family. Heterotrimer of RPA1, RPA2 and RPA3 (canonical replication protein A complex). Interacts with RPA1A and RPA3. Post-translationally, phosphorylated in a cell-cycle-dependent manner (from the S phase until mitosis). In response to DNA damage, recruited to DNA-repair nuclear foci, as a hypophosphorylated form.

The protein localises to the nucleus. Its function is as follows. Component of the replication protein A complex (RPA) required for DNA recombination, repair and replication. The activity of RPA is mediated by single-stranded DNA binding and protein interactions. The chain is Replication protein A 32 kDa subunit B (RPA2B) from Oryza sativa subsp. japonica (Rice).